We begin with the raw amino-acid sequence, 560 residues long: 2-succinyl-5-enolpyruvyl-6-hydroxy-3-cyclohexene-1-carboxylate synthase (560 aa).

This sequence belongs to the TPP enzyme family. MenD subfamily. In terms of assembly, homodimer. It depends on Mg(2+) as a cofactor. Mn(2+) is required as a cofactor. Thiamine diphosphate serves as cofactor.

It carries out the reaction isochorismate + 2-oxoglutarate + H(+) = 5-enolpyruvoyl-6-hydroxy-2-succinyl-cyclohex-3-ene-1-carboxylate + CO2. It functions in the pathway quinol/quinone metabolism; 1,4-dihydroxy-2-naphthoate biosynthesis; 1,4-dihydroxy-2-naphthoate from chorismate: step 2/7. The protein operates within quinol/quinone metabolism; menaquinone biosynthesis. Functionally, catalyzes the thiamine diphosphate-dependent decarboxylation of 2-oxoglutarate and the subsequent addition of the resulting succinic semialdehyde-thiamine pyrophosphate anion to isochorismate to yield 2-succinyl-5-enolpyruvyl-6-hydroxy-3-cyclohexene-1-carboxylate (SEPHCHC). This Pectobacterium carotovorum subsp. carotovorum (strain PC1) protein is 2-succinyl-5-enolpyruvyl-6-hydroxy-3-cyclohexene-1-carboxylate synthase.